The primary structure comprises 92 residues: Small ribosomal subunit protein bS20 (92 aa).

The tract at residues 1–20 (MANIASAKKRARQAENNRAH) is disordered.

It belongs to the bacterial ribosomal protein bS20 family.

Functionally, binds directly to 16S ribosomal RNA. The polypeptide is Small ribosomal subunit protein bS20 (Methylococcus capsulatus (strain ATCC 33009 / NCIMB 11132 / Bath)).